We begin with the raw amino-acid sequence, 129 residues long: Holo-[acyl-carrier-protein] synthase (129 aa).

2 residues coordinate Mg(2+): Asp8 and Glu60.

This sequence belongs to the P-Pant transferase superfamily. AcpS family. Requires Mg(2+) as cofactor.

Its subcellular location is the cytoplasm. It catalyses the reaction apo-[ACP] + CoA = holo-[ACP] + adenosine 3',5'-bisphosphate + H(+). Transfers the 4'-phosphopantetheine moiety from coenzyme A to a Ser of acyl-carrier-protein. This Anaeromyxobacter sp. (strain Fw109-5) protein is Holo-[acyl-carrier-protein] synthase.